The primary structure comprises 704 residues: Elongation factor G (704 aa).

Residues 10–290 (TKVRNIGIMA…AVVDYLPSPL (281 aa)) form the tr-type G domain. GTP contacts are provided by residues 19–26 (AHIDAGKT), 83–87 (DTPGH), and 137–140 (NKMD).

It belongs to the TRAFAC class translation factor GTPase superfamily. Classic translation factor GTPase family. EF-G/EF-2 subfamily.

The protein resides in the cytoplasm. Catalyzes the GTP-dependent ribosomal translocation step during translation elongation. During this step, the ribosome changes from the pre-translocational (PRE) to the post-translocational (POST) state as the newly formed A-site-bound peptidyl-tRNA and P-site-bound deacylated tRNA move to the P and E sites, respectively. Catalyzes the coordinated movement of the two tRNA molecules, the mRNA and conformational changes in the ribosome. This Beutenbergia cavernae (strain ATCC BAA-8 / DSM 12333 / CCUG 43141 / JCM 11478 / NBRC 16432 / NCIMB 13614 / HKI 0122) protein is Elongation factor G.